Consider the following 475-residue polypeptide: MNNLFRSIPAVDLCLTALGQADPSLVEAPRGLMRDLITEFWDKKRHEIREGHCKKNEQLTLDACLPGLMTHVRAGLRSRFRAALNATGVVVHTNMGRSVLAKEAREAVITAATGYCNLELDMQSGGRGSRHALVEDLLCRLTGAEAALVVNNNAAAVLLVLDTFCKGGEVVVSRGELVEIGGSFRIPEVMEKSGATLREVGATNRTHLHDYSAAINENTRALMRVHTSNYRIVGFHSAVPLPELAALARRHDLPLIEDLGSGSLTDFSSCGLPDEPTVPSVLAQGADIATFSGDKVLGGPQAGIITGRKDMVDTLKRNPLTRALRCDKLCLAGLEATLRLYLDPEKARQKIPTLRMICRPAEELARAARTLAAALRKGLAGSSASCLVSLRADVSRVGGGAFPQYDLPTTLVCLKPENCSATALKAALLRTDPPLIGRLEDDSFCLDPRTLSAEDRPTLLRVLREALALAAKEII.

Lysine 295 is subject to N6-(pyridoxal phosphate)lysine.

It belongs to the SelA family. Pyridoxal 5'-phosphate serves as cofactor.

The protein localises to the cytoplasm. It carries out the reaction L-seryl-tRNA(Sec) + selenophosphate + H(+) = L-selenocysteinyl-tRNA(Sec) + phosphate. It participates in aminoacyl-tRNA biosynthesis; selenocysteinyl-tRNA(Sec) biosynthesis; selenocysteinyl-tRNA(Sec) from L-seryl-tRNA(Sec) (bacterial route): step 1/1. Converts seryl-tRNA(Sec) to selenocysteinyl-tRNA(Sec) required for selenoprotein biosynthesis. This Desulfovibrio desulfuricans (strain ATCC 27774 / DSM 6949 / MB) protein is L-seryl-tRNA(Sec) selenium transferase.